We begin with the raw amino-acid sequence, 174 residues long: ATP-dependent protease subunit HslV (174 aa).

T2 is an active-site residue. 3 residues coordinate Na(+): G159, D162, and T165.

This sequence belongs to the peptidase T1B family. HslV subfamily. As to quaternary structure, a double ring-shaped homohexamer of HslV is capped on each side by a ring-shaped HslU homohexamer. The assembly of the HslU/HslV complex is dependent on binding of ATP.

Its subcellular location is the cytoplasm. The catalysed reaction is ATP-dependent cleavage of peptide bonds with broad specificity.. Its activity is regulated as follows. Allosterically activated by HslU binding. Protease subunit of a proteasome-like degradation complex believed to be a general protein degrading machinery. This is ATP-dependent protease subunit HslV from Lacticaseibacillus casei (strain BL23) (Lactobacillus casei).